The sequence spans 95 residues: Small ribosomal subunit protein bS20 (95 aa).

Belongs to the bacterial ribosomal protein bS20 family.

Binds directly to 16S ribosomal RNA. The polypeptide is Small ribosomal subunit protein bS20 (Fervidobacterium nodosum (strain ATCC 35602 / DSM 5306 / Rt17-B1)).